The sequence spans 158 residues: Endoribonuclease YbeY (158 aa).

3 residues coordinate Zn(2+): His-119, His-123, and Asp-129.

This sequence belongs to the endoribonuclease YbeY family. It depends on Zn(2+) as a cofactor.

Its subcellular location is the cytoplasm. In terms of biological role, single strand-specific metallo-endoribonuclease involved in late-stage 70S ribosome quality control and in maturation of the 3' terminus of the 16S rRNA. This is Endoribonuclease YbeY from Chlamydia abortus (strain DSM 27085 / S26/3) (Chlamydophila abortus).